The following is a 409-amino-acid chain: Glutamyl-tRNA reductase (409 aa).

Substrate-binding positions include 46–49 (TCNR), Ser-88, 93–95 (ENE), and Gln-99. The active-site Nucleophile is the Cys-47. 164–169 (GNGMIA) is an NADP(+) binding site.

This sequence belongs to the glutamyl-tRNA reductase family. In terms of assembly, homodimer.

It catalyses the reaction (S)-4-amino-5-oxopentanoate + tRNA(Glu) + NADP(+) = L-glutamyl-tRNA(Glu) + NADPH + H(+). It functions in the pathway porphyrin-containing compound metabolism; protoporphyrin-IX biosynthesis; 5-aminolevulinate from L-glutamyl-tRNA(Glu): step 1/2. In terms of biological role, catalyzes the NADPH-dependent reduction of glutamyl-tRNA(Glu) to glutamate 1-semialdehyde (GSA). The sequence is that of Glutamyl-tRNA reductase from Thermoplasma acidophilum (strain ATCC 25905 / DSM 1728 / JCM 9062 / NBRC 15155 / AMRC-C165).